The primary structure comprises 402 residues: Ferrochelatase, mitochondrial (402 aa).

A mitochondrion-targeting transit peptide spans 1–33 (MAAAGRAARPLVAGGRQLRVPLRWRGQVAAAAP). Positions 94, 102, and 109 each coordinate protoporphyrin IX. Residue Cys175 coordinates [2Fe-2S] cluster. Catalysis depends on residues His209 and Asp362. [2Fe-2S] cluster-binding residues include Cys382, Cys385, and Cys390.

This sequence belongs to the ferrochelatase family. As to quaternary structure, homodimer. Homotetramer. [2Fe-2S] cluster serves as cofactor.

It localises to the mitochondrion inner membrane. It carries out the reaction heme b + 2 H(+) = protoporphyrin IX + Fe(2+). It functions in the pathway porphyrin-containing compound metabolism; protoheme biosynthesis; protoheme from protoporphyrin-IX: step 1/1. In terms of biological role, catalyzes the ferrous insertion into protoporphyrin IX. This Gallus gallus (Chicken) protein is Ferrochelatase, mitochondrial.